The chain runs to 438 residues: 3-phosphoshikimate 1-carboxyvinyltransferase (438 aa).

3 residues coordinate 3-phosphoshikimate: K21, S22, and R26. K21 contacts phosphoenolpyruvate. The phosphoenolpyruvate site is built by G95 and R123. 3-phosphoshikimate contacts are provided by S167, Q169, D315, and K342. Q169 is a phosphoenolpyruvate binding site. Catalysis depends on D315, which acts as the Proton acceptor. Residues R346 and R387 each coordinate phosphoenolpyruvate.

It belongs to the EPSP synthase family. Monomer.

The protein localises to the cytoplasm. It carries out the reaction 3-phosphoshikimate + phosphoenolpyruvate = 5-O-(1-carboxyvinyl)-3-phosphoshikimate + phosphate. It participates in metabolic intermediate biosynthesis; chorismate biosynthesis; chorismate from D-erythrose 4-phosphate and phosphoenolpyruvate: step 6/7. In terms of biological role, catalyzes the transfer of the enolpyruvyl moiety of phosphoenolpyruvate (PEP) to the 5-hydroxyl of shikimate-3-phosphate (S3P) to produce enolpyruvyl shikimate-3-phosphate and inorganic phosphate. This Coxiella burnetii (strain CbuG_Q212) (Coxiella burnetii (strain Q212)) protein is 3-phosphoshikimate 1-carboxyvinyltransferase.